We begin with the raw amino-acid sequence, 187 residues long: Protein dj-1beta (187 aa).

Cys-45 is subject to Cysteine sulfinic acid (-SO2H). Cys-104 functions as the Nucleophile in the catalytic mechanism. The residue at position 104 (Cys-104) is a Cysteine sulfinic acid (-SO2H); alternate.

Post-translationally, oxidation of Cys-45 and Cys-104 in response to oxidative stress. Levels of oxidation increase with age. In terms of tissue distribution, expressed in the head and testis (at protein level). Ubiquitously expressed at constant levels.

It is found in the mitochondrion. The protein resides in the cytoplasm. It localises to the nucleus. Its function is as follows. Plays an important role in cell protection against oxidative stress and cell death by acting as a oxidative stress sensor. Does not play a role in methylglyoxal detoxification. Plays a role in mitochondrial function together with Pink1. In motor neurons regulates structural synaptic plasticity of locomotor behavior as part of the PTEN-phosphatidylinositol 3-kinase pathway in response to oxygen species (ROS) levels. This is Protein dj-1beta from Drosophila melanogaster (Fruit fly).